The primary structure comprises 428 residues: Putative zinc metalloprotease SAR1238 (428 aa).

Zn(2+) is bound at residue His-21. The active site involves Glu-22. Residue His-25 coordinates Zn(2+). The next 4 membrane-spanning stretches (helical) occupy residues 172–194, 309–331, 352–374, and 401–420; these read FLTL…IGLA, GSTY…GFSF, IISL…LIPI, and TTII…LVTW. In terms of domain architecture, PDZ spans 186-269; it reads ALVLFIGLAY…TKSVELTPKK (84 aa).

The protein belongs to the peptidase M50B family. The cofactor is Zn(2+).

It is found in the cell membrane. This is Putative zinc metalloprotease SAR1238 from Staphylococcus aureus (strain MRSA252).